We begin with the raw amino-acid sequence, 218 residues long: N-(5'-phosphoribosyl)anthranilate isomerase (218 aa).

Belongs to the TrpF family.

It catalyses the reaction N-(5-phospho-beta-D-ribosyl)anthranilate = 1-(2-carboxyphenylamino)-1-deoxy-D-ribulose 5-phosphate. Its pathway is amino-acid biosynthesis; L-tryptophan biosynthesis; L-tryptophan from chorismate: step 3/5. This Halobacterium salinarum (strain ATCC 29341 / DSM 671 / R1) protein is N-(5'-phosphoribosyl)anthranilate isomerase.